A 181-amino-acid polypeptide reads, in one-letter code: Protein Syd (181 aa).

The protein belongs to the Syd family.

Its subcellular location is the cell inner membrane. Interacts with the SecY protein in vivo. May bind preferentially to an uncomplexed state of SecY, thus functioning either as a chelating agent for excess SecY in the cell or as a regulatory factor that negatively controls the translocase function. The polypeptide is Protein Syd (Escherichia coli (strain K12 / DH10B)).